Reading from the N-terminus, the 184-residue chain is Photosystem I assembly protein Ycf4 (184 aa).

2 consecutive transmembrane segments (helical) span residues 21-43 and 58-80; these read NFCWACILFLGSLGFLLVGTSSY and IFFPQGIVMSFYGIAGLFISSYL.

Belongs to the Ycf4 family.

The protein resides in the plastid. Its subcellular location is the chloroplast thylakoid membrane. Functionally, seems to be required for the assembly of the photosystem I complex. The polypeptide is Photosystem I assembly protein Ycf4 (Calycanthus floridus var. glaucus (Eastern sweetshrub)).